The sequence spans 421 residues: UDP-N-acetylglucosamine 1-carboxyvinyltransferase (421 aa).

Position 22–23 (Lys22–Asn23) interacts with phosphoenolpyruvate. Arg92 contributes to the UDP-N-acetyl-alpha-D-glucosamine binding site. Catalysis depends on Cys116, which acts as the Proton donor. Cys116 is modified (2-(S-cysteinyl)pyruvic acid O-phosphothioketal). UDP-N-acetyl-alpha-D-glucosamine contacts are provided by residues Arg121–Gln125, Asp308, and Ile330.

The protein belongs to the EPSP synthase family. MurA subfamily.

The protein localises to the cytoplasm. It carries out the reaction phosphoenolpyruvate + UDP-N-acetyl-alpha-D-glucosamine = UDP-N-acetyl-3-O-(1-carboxyvinyl)-alpha-D-glucosamine + phosphate. The protein operates within cell wall biogenesis; peptidoglycan biosynthesis. Cell wall formation. Adds enolpyruvyl to UDP-N-acetylglucosamine. In Ralstonia nicotianae (strain ATCC BAA-1114 / GMI1000) (Ralstonia solanacearum), this protein is UDP-N-acetylglucosamine 1-carboxyvinyltransferase.